Reading from the N-terminus, the 95-residue chain is Small ribosomal subunit protein bS6 (95 aa).

Belongs to the bacterial ribosomal protein bS6 family.

In terms of biological role, binds together with bS18 to 16S ribosomal RNA. The polypeptide is Small ribosomal subunit protein bS6 (Corynebacterium jeikeium (strain K411)).